Here is a 590-residue protein sequence, read N- to C-terminus: Aspartate--tRNA(Asp/Asn) ligase (590 aa).

Glu175 lines the L-aspartate pocket. Residues 199-202 (QQYK) form an aspartate region. Arg221 and His450 together coordinate L-aspartate. ATP is bound at residue 221–223 (RDE). Position 484 (Glu484) interacts with ATP. Arg491 is a binding site for L-aspartate. 536 to 539 (GVDR) provides a ligand contact to ATP.

It belongs to the class-II aminoacyl-tRNA synthetase family. Type 1 subfamily. Homodimer.

Its subcellular location is the cytoplasm. It catalyses the reaction tRNA(Asx) + L-aspartate + ATP = L-aspartyl-tRNA(Asx) + AMP + diphosphate. Aspartyl-tRNA synthetase with relaxed tRNA specificity since it is able to aspartylate not only its cognate tRNA(Asp) but also tRNA(Asn). Reaction proceeds in two steps: L-aspartate is first activated by ATP to form Asp-AMP and then transferred to the acceptor end of tRNA(Asp/Asn). In Bradyrhizobium sp. (strain ORS 278), this protein is Aspartate--tRNA(Asp/Asn) ligase.